The chain runs to 280 residues: 4-diphosphocytidyl-2-C-methyl-D-erythritol kinase (280 aa).

Residue K8 is part of the active site. 91–101 (PVAAGLAGGST) contributes to the ATP binding site. D133 is a catalytic residue.

This sequence belongs to the GHMP kinase family. IspE subfamily.

It catalyses the reaction 4-CDP-2-C-methyl-D-erythritol + ATP = 4-CDP-2-C-methyl-D-erythritol 2-phosphate + ADP + H(+). Its pathway is isoprenoid biosynthesis; isopentenyl diphosphate biosynthesis via DXP pathway; isopentenyl diphosphate from 1-deoxy-D-xylulose 5-phosphate: step 3/6. In terms of biological role, catalyzes the phosphorylation of the position 2 hydroxy group of 4-diphosphocytidyl-2C-methyl-D-erythritol. The protein is 4-diphosphocytidyl-2-C-methyl-D-erythritol kinase of Clostridium botulinum (strain ATCC 19397 / Type A).